Consider the following 128-residue polypeptide: Large ribosomal subunit protein bL20c (128 aa).

This sequence belongs to the bacterial ribosomal protein bL20 family.

It localises to the plastid. The protein localises to the chloroplast. In terms of biological role, binds directly to 23S ribosomal RNA and is necessary for the in vitro assembly process of the 50S ribosomal subunit. It is not involved in the protein synthesizing functions of that subunit. This is Large ribosomal subunit protein bL20c from Gossypium barbadense (Sea Island cotton).